The chain runs to 470 residues: ATP synthase subunit beta (470 aa).

Residue 157-164 (GGAGVGKT) participates in ATP binding.

It belongs to the ATPase alpha/beta chains family. As to quaternary structure, F-type ATPases have 2 components, CF(1) - the catalytic core - and CF(0) - the membrane proton channel. CF(1) has five subunits: alpha(3), beta(3), gamma(1), delta(1), epsilon(1). CF(0) has three main subunits: a(1), b(2) and c(9-12). The alpha and beta chains form an alternating ring which encloses part of the gamma chain. CF(1) is attached to CF(0) by a central stalk formed by the gamma and epsilon chains, while a peripheral stalk is formed by the delta and b chains.

The protein resides in the cell inner membrane. The enzyme catalyses ATP + H2O + 4 H(+)(in) = ADP + phosphate + 5 H(+)(out). Functionally, produces ATP from ADP in the presence of a proton gradient across the membrane. The catalytic sites are hosted primarily by the beta subunits. The sequence is that of ATP synthase subunit beta from Citrifermentans bemidjiense (strain ATCC BAA-1014 / DSM 16622 / JCM 12645 / Bem) (Geobacter bemidjiensis).